Reading from the N-terminus, the 1659-residue chain is Intersectin-2 (1659 aa).

The region spanning 22–110 (ERTKHDKQFD…PIMKQPPMFS (89 aa)) is the EH 1 domain. Residues 54–89 (LPAPVLAEIWALSDLNKDGKMDQQEFSIAMKLIKLK) form the EF-hand 1 domain. Asp67, Asn69, Asp71, Lys73, and Glu78 together coordinate Ca(2+). Ser110, Ser211, and Ser231 each carry phosphoserine. Low complexity predominate over residues 220–231 (STSSTASLSGNS). The interval 220–242 (STSSTASLSGNSPKTGTSEWAVP) is disordered. One can recognise an EH 2 domain in the interval 245–334 (SRLKYRQKFN…PELVPPSFRG (90 aa)). Positions 278–313 (LSQTQLATIWTLADIDGDGQLKAEEFILAMHLTDMA) constitute an EF-hand 2 domain. Residues 335 to 382 (GKQVDSVNGTLPSYQKTQEEEPQKKLPVTFEDKRKANYERGNMELEKR) form a disordered region. Residues 339–350 (DSVNGTLPSYQK) show a composition bias toward polar residues. Over residues 351–382 (TQEEEPQKKLPVTFEDKRKANYERGNMELEKR) the composition is skewed to basic and acidic residues. Residues 365–717 (EDKRKANYER…KAEAKQSETA (353 aa)) are a coiled coil. Position 554 is a phosphotyrosine (Tyr554). Thr574 carries the phosphothreonine modification. The span at 689 to 713 (KQKRLQEEKSQDKTQEEERKAEAKQ) shows a compositional bias: basic and acidic residues. The tract at residues 689–715 (KQKRLQEEKSQDKTQEEERKAEAKQSE) is disordered. Residues 718-779 (SALVNYRALY…PCNYVEKVLS (62 aa)) enclose the SH3 1 domain. Position 836 is a phosphothreonine (Thr836). A phosphoserine mark is found at Ser838 and Ser843. Residues 852 to 910 (VENLKAQALCSWTAKKENHLNFSKHDVITVLEQQENWWFGEVHGGRGWFPKSYVKLIPG) form the SH3 2 domain. Tyr922 carries the post-translational modification Phosphotyrosine. SH3 domains are found at residues 942–1000 (PVGE…PKDQ), 1014–1078 (KKPE…LLGP), and 1088–1147 (HAVC…MTTD). Residues 1170 to 1357 (KRQGYIHELI…EELCSQVNEG (188 aa)) form the DH domain. In terms of domain architecture, PH spans 1396–1506 (KLLHSGKLYK…WVQKIKGASE (111 aa)). In terms of domain architecture, C2 spans 1514-1630 (KKREKAYQAR…RTEQESKGPT (117 aa)). Positions 1602, 1605, and 1608 each coordinate Ca(2+).

Belongs to a complex that may contain multimers of ITSN1, ITSN2 and EPS15, and different partners according to the step in the endocytic process. Interacts with ADAM15. Interacts with FASLG. Interacts with ANKRD54. Interacts with FCHO2. Ca(2+) serves as cofactor. Widely expressed in adult tissues.

It localises to the cytoplasm. In terms of biological role, adapter protein that may provide indirect link between the endocytic membrane traffic and the actin assembly machinery. May regulate the formation of clathrin-coated vesicles (CCPs). Seems to be involved in CCPs maturation including invagination or budding. Involved in endocytosis of integrin beta-1 (ITGB1) and transferrin receptor (TFR). Plays a role in dendrite formation by melanocytes. This is Intersectin-2 (Itsn2) from Mus musculus (Mouse).